Reading from the N-terminus, the 712-residue chain is Envelope glycoprotein gp160 (712 aa).

An N-terminal signal peptide occupies residues 1–24; sequence MCGRNQLFVASLLASACLIYCVQY. At 25–673 the chain is on the extracellular side; that stretch reads VTVFYGVPVW…LTSWIKYIQY (649 aa). An N-linked (GlcNAc...) asparagine; by host glycan is attached at Asn36. Residues Cys43 and Cys56 are joined by a disulfide bond. N-linked (GlcNAc...) asparagine; by host glycans are attached at residues Asn69, Asn78, Asn113, Asn119, Asn131, Asn137, Asn145, Asn160, Asn173, Asn200, Asn232, Asn235, Asn242, Asn266, Asn272, Asn283, Asn294, Asn304, Asn359, Asn392, Asn402, Asn405, Asn442, Asn457, and Asn460. Intrachain disulfides connect Cys100–Cys208, Cys107–Cys199, Cys112–Cys157, Cys221–Cys251, and Cys231–Cys243. The interval 112 to 156 is V1; the sequence is CNSTTAKNTTSTPTTTTTANTTIGENSSCIRTDNCTGLGEEEMVD. The V2 stretch occupies residues 157 to 199; sequence CQFNMTGLERDKKKLYNETWYSKDVVCESKDTKKEKTCYMNHC. Positions 299–331 are V3; the sequence is CKRPGNKTVVPITLMSGLVFHSQPINRRPRQAW. A disulfide bridge connects residues Cys299 and Cys332. Cystine bridges form between Cys384–Cys441 and Cys391–Cys414. Residues 391–414 are V4; it reads CNMTWFLNWVENRTNQTQHNYVPC. Positions 457–463 are V5; sequence NQTNITF. The interval 506 to 526 is fusion peptide; the sequence is GVFVLGFLGFLTTAGAAMGAA. Residues 569 to 585 form an immunosuppression region; it reads LQARVTAIEKYLKDQAQ. Residues Asn605, Asn614, and Asn630 are each glycosylated (N-linked (GlcNAc...) asparagine; by host). The stretch at 614–646 forms a coiled coil; it reads NITWQEWEQRIRNLEANISESLEQAQIQQEKNM. Residues 651 to 672 are MPER; binding to GalCer; that stretch reads KLNSWDVFSNWFDLTSWIKYIQ. A helical membrane pass occupies residues 674–694; it reads GVYIVVGIIVLRMVIYVVQML. At 695–712 the chain is on the cytoplasmic side; it reads SRLRKGYRPVFSSPPAYS. The short motif at 701–704 is the YXXV motif; contains endocytosis signal element; the sequence is YRPV.

In terms of assembly, the mature envelope protein (Env) consists of a homotrimer of non-covalently associated gp120-gp41 heterodimers. The resulting complex protrudes from the virus surface as a spike. There seems to be as few as 10 spikes on the average virion. Interacts with human CD4, CCR5 and CXCR4, to form a P4HB/PDI-CD4-CXCR4-gp120 complex. Gp120 also interacts with the C-type lectins CD209/DC-SIGN and CLEC4M/DC-SIGNR (collectively referred to as DC-SIGN(R)). Gp120 and gp41 interact with GalCer. The mature envelope protein (Env) consists of a homotrimer of non-covalently associated gp120-gp41 heterodimers. The resulting complex protrudes from the virus surface as a spike. There seems to be as few as 10 spikes on the average virion. Specific enzymatic cleavages in vivo yield mature proteins. Envelope glycoproteins are synthesized as an inactive precursor that is heavily N-glycosylated and processed likely by host cell furin in the Golgi to yield the mature SU and TM proteins. The cleavage site between SU and TM requires the minimal sequence [KR]-X-[KR]-R.

Its subcellular location is the virion membrane. The protein resides in the host cell membrane. It localises to the host endosome membrane. In terms of biological role, the surface protein gp120 (SU) attaches the virus to the host lymphoid cell by binding to the primary receptor CD4. This interaction induces a structural rearrangement creating a high affinity binding site for a chemokine coreceptor like CXCR4 and/or CCR5. This peculiar 2 stage receptor-interaction strategy allows gp120 to maintain the highly conserved coreceptor-binding site in a cryptic conformation, protected from neutralizing antibodies. Since CD4 also displays a binding site for the disulfide-isomerase P4HB/PDI, a P4HB/PDI-CD4-CXCR4-gp120 complex may form. In that complex, P4HB/PDI could reach and reduce gp120 disulfide bonds, causing major conformational changes in gp120. TXN, another PDI family member could also be involved in disulfide rearrangements in Env during fusion. These changes are transmitted to the transmembrane protein gp41 and are thought to activate its fusogenic potential by unmasking its fusion peptide. Its function is as follows. The surface protein gp120 is a ligand for CD209/DC-SIGN and CLEC4M/DC-SIGNR, which are respectively found on dendritic cells (DCs), and on endothelial cells of liver sinusoids and lymph node sinuses. These interactions allow capture of viral particles at mucosal surfaces by these cells and subsequent transmission to permissive cells. DCs are professional antigen presenting cells, critical for host immunity by inducing specific immune responses against a broad variety of pathogens. They act as sentinels in various tissues where they take up antigen, process it, and present it to T-cells following migration to lymphoid organs. HIV subverts the migration properties of dendritic cells to gain access to CD4+ T-cells in lymph nodes. Virus transmission to permissive T-cells occurs either in trans (without DCs infection, through viral capture and transmission), or in cis (following DCs productive infection, through the usual CD4-gp120 interaction), thereby inducing a robust infection. In trans infection, bound virions remain infectious over days and it is proposed that they are not degraded, but protected in non-lysosomal acidic organelles within the DCs close to the cell membrane thus contributing to the viral infectious potential during DCs' migration from the periphery to the lymphoid tissues. On arrival at lymphoid tissues, intact virions recycle back to DCs' cell surface allowing virus transmission to CD4+ T-cells. Virion capture also seems to lead to MHC-II-restricted viral antigen presentation, and probably to the activation of HIV-specific CD4+ cells. Functionally, the transmembrane protein gp41 (TM) acts as a class I viral fusion protein. Under the current model, the protein has at least 3 conformational states: pre-fusion native state, pre-hairpin intermediate state, and post-fusion hairpin state. During fusion of viral and target intracellular membranes, the coiled coil regions (heptad repeats) assume a trimer-of-hairpins structure, positioning the fusion peptide in close proximity to the C-terminal region of the ectodomain. The formation of this structure appears to drive apposition and subsequent fusion of viral and target cell membranes. Complete fusion occurs in host cell endosomes and is dynamin-dependent, however some lipid transfer might occur at the plasma membrane. The virus undergoes clathrin-dependent internalization long before endosomal fusion, thus minimizing the surface exposure of conserved viral epitopes during fusion and reducing the efficacy of inhibitors targeting these epitopes. Membranes fusion leads to delivery of the nucleocapsid into the cytoplasm. The envelope glycoprotein gp160 precursor down-modulates cell surface CD4 antigen by interacting with it in the endoplasmic reticulum and blocking its transport to the cell surface. In terms of biological role, the gp120-gp41 heterodimer seems to contribute to T-cell depletion during HIV-1 infection. The envelope glycoproteins expressed on the surface of infected cells induce apoptosis through an interaction with uninfected cells expressing the receptor (CD4) and the coreceptors CXCR4 or CCR5. This type of bystander killing may be obtained by at least three distinct mechanisms. First, the interaction between the 2 cells can induce cellular fusion followed by nuclear fusion within the syncytium. Syncytia are condemned to die from apoptosis. Second, the 2 interacting cells may not fuse entirely and simply exchange plasma membrane lipids, after a sort of hemifusion process, followed by rapid death. Third, it is possible that virus-infected cells, on the point of undergoing apoptosis, fuse with CD4-expressing cells, in which case apoptosis is rapidly transmitted from one cell to the other and thus occurs in a sort of contagious fashion. Its function is as follows. The gp120-gp41 heterodimer allows rapid transcytosis of the virus through CD4 negative cells such as simple epithelial monolayers of the intestinal, rectal and endocervical epithelial barriers. Both gp120 and gp41 specifically recognize glycosphingolipids galactosyl-ceramide (GalCer) or 3' sulfo-galactosyl-ceramide (GalS) present in the lipid rafts structures of epithelial cells. Binding to these alternative receptors allows the rapid transcytosis of the virus through the epithelial cells. This transcytotic vesicle-mediated transport of virions from the apical side to the basolateral side of the epithelial cells does not involve infection of the cells themselves. In Homo sapiens (Human), this protein is Envelope glycoprotein gp160 (env).